The primary structure comprises 154 residues: Transmembrane protein 35B (154 aa).

A signal peptide spans 1-22 (MALLLSVLRVLLGGFFALVGLA). The next 3 helical transmembrane spans lie at 63-83 (IAVG…PPML), 85-105 (EISN…LAAL), and 112-132 (CIPA…QLLA).

The protein belongs to the DoxX family.

Its subcellular location is the membrane. In Homo sapiens (Human), this protein is Transmembrane protein 35B.